The sequence spans 185 residues: Ribosome-recycling factor (185 aa).

This sequence belongs to the RRF family.

It localises to the cytoplasm. Responsible for the release of ribosomes from messenger RNA at the termination of protein biosynthesis. May increase the efficiency of translation by recycling ribosomes from one round of translation to another. This chain is Ribosome-recycling factor, found in Aromatoleum aromaticum (strain DSM 19018 / LMG 30748 / EbN1) (Azoarcus sp. (strain EbN1)).